Reading from the N-terminus, the 383-residue chain is Probable mannan endo-1,4-beta-mannosidase A (383 aa).

The first 21 residues, 1-21 (MKLSNALLTLASLALANVSTA), serve as a signal peptide directing secretion. A glycan (N-linked (GlcNAc...) asparagine) is linked at asparagine 17. Tryptophan 92 contributes to the substrate binding site. Asparagine 194 is a glycosylation site (N-linked (GlcNAc...) asparagine). Substrate is bound at residue asparagine 205. The active-site Proton donor is the glutamate 206. An N-linked (GlcNAc...) asparagine glycan is attached at asparagine 263. A substrate-binding site is contributed by tyrosine 281. Glutamate 314 functions as the Nucleophile in the catalytic mechanism. Residue tryptophan 344 coordinates substrate.

Belongs to the glycosyl hydrolase 5 (cellulase A) family.

It localises to the secreted. It carries out the reaction Random hydrolysis of (1-&gt;4)-beta-D-mannosidic linkages in mannans, galactomannans and glucomannans.. Endo-1,4-mannanase, a crucial enzyme for depolymerization of seed galactomannans and wood galactoglucomannans. The polypeptide is Probable mannan endo-1,4-beta-mannosidase A (manA) (Aspergillus niger (strain ATCC MYA-4892 / CBS 513.88 / FGSC A1513)).